The chain runs to 699 residues: Bifunctional protein GAL10 (699 aa).

The galactowaldenase stretch occupies residues 1 to 357 (MTAQLQSEST…TTENPFGYQL (357 aa)). 13-44 (IVLVTGGAGYIGSHTVVELIENGYDCVVADNL) contacts NAD(+). The interval 358 to 699 (RGVEARFSAE…YGSKIVYRFS (342 aa)) is mutarotase. His-537 acts as the For mutarotase activity in catalysis. At Ser-562 the chain carries Phosphoserine.

The protein in the N-terminal section; belongs to the NAD(P)-dependent epimerase/dehydratase family. It in the C-terminal section; belongs to the aldose epimerase family. Requires NAD(+) as cofactor.

The catalysed reaction is UDP-alpha-D-glucose = UDP-alpha-D-galactose. It catalyses the reaction alpha-D-glucose = beta-D-glucose. It functions in the pathway carbohydrate metabolism; galactose metabolism. Its pathway is carbohydrate metabolism; hexose metabolism. In terms of biological role, mutarotase converts alpha-aldose to the beta-anomer. It is active on D-glucose, L-arabinose, D-xylose, D-galactose, maltose and lactose. In Saccharomyces cerevisiae (strain ATCC 204508 / S288c) (Baker's yeast), this protein is Bifunctional protein GAL10 (GAL10).